A 388-amino-acid polypeptide reads, in one-letter code: Protein-glutamate methylesterase/protein-glutamine glutaminase 1 (388 aa).

In terms of domain architecture, Response regulatory spans 4 to 121; sequence QVLVVDDSSF…ATNKDEAIRL (118 aa). Asp-55 bears the 4-aspartylphosphate mark. The disordered stretch occupies residues 149-190; the sequence is SARAGLSSTSPTLGSSTLGRSPASGLASSASRNSPTVSTPAS. Positions 153–169 are enriched in low complexity; it reads GLSSTSPTLGSSTLGRS. The span at 174 to 189 shows a compositional bias: polar residues; that stretch reads LASSASRNSPTVSTPA. In terms of domain architecture, CheB-type methylesterase spans 188–388; sequence PASAIRASGK…EAILKESGRG (201 aa). Catalysis depends on residues Ser-207, His-234, and Asp-330.

Belongs to the CheB family. Phosphorylated by CheA. Phosphorylation of the N-terminal regulatory domain activates the methylesterase activity.

It localises to the cytoplasm. The catalysed reaction is [protein]-L-glutamate 5-O-methyl ester + H2O = L-glutamyl-[protein] + methanol + H(+). It carries out the reaction L-glutaminyl-[protein] + H2O = L-glutamyl-[protein] + NH4(+). Involved in chemotaxis. Part of a chemotaxis signal transduction system that modulates chemotaxis in response to various stimuli. Catalyzes the demethylation of specific methylglutamate residues introduced into the chemoreceptors (methyl-accepting chemotaxis proteins or MCP) by CheR. Also mediates the irreversible deamidation of specific glutamine residues to glutamic acid. The chain is Protein-glutamate methylesterase/protein-glutamine glutaminase 1 from Shewanella denitrificans (strain OS217 / ATCC BAA-1090 / DSM 15013).